A 381-amino-acid polypeptide reads, in one-letter code: Homoserine O-acetyltransferase (381 aa).

Positions 47-359 (NAILICHALT…DKGHDAFLLD (313 aa)) constitute an AB hydrolase-1 domain. The active-site Nucleophile is the Ser153. Residue Arg223 coordinates substrate. Catalysis depends on residues Asp320 and His353. Asp354 is a binding site for substrate.

The protein belongs to the AB hydrolase superfamily. MetX family. As to quaternary structure, homodimer.

It is found in the cytoplasm. The enzyme catalyses L-homoserine + acetyl-CoA = O-acetyl-L-homoserine + CoA. It participates in amino-acid biosynthesis; L-methionine biosynthesis via de novo pathway; O-acetyl-L-homoserine from L-homoserine: step 1/1. Transfers an acetyl group from acetyl-CoA to L-homoserine, forming acetyl-L-homoserine. The protein is Homoserine O-acetyltransferase of Acidiphilium cryptum (strain JF-5).